The chain runs to 363 residues: Zinc finger protein 830 (363 aa).

Residue Ala2 is modified to N-acetylalanine. A coiled-coil region spans residues 16–40; the sequence is VNQEELRRLMREKQRLSTNRKRIES. The C2H2-type zinc-finger motif lies at 53–75; the sequence is CALCNTPVKSELLWQTHVLGKQH. The segment at 81 to 213 is disordered; the sequence is ELKGAKGATQ…NPPKAPLVPH (133 aa). The segment covering 90–99 has biased composition (polar residues); it reads QGPSTGTVPQ. Over residues 104 to 115 the composition is skewed to basic and acidic residues; it reads RATDVESQDAKK. Over residues 129–143 the composition is skewed to low complexity; that stretch reads SASSANLDAARAAPS. A compositionally biased stretch (acidic residues) spans 152–164; it reads DYDDEEEEEEEGG. The segment covering 165-184 has biased composition (basic and acidic residues); it reads GEERRDSSKHLPDAQGKEHS. Over residues 189–205 the composition is skewed to polar residues; the sequence is RETTSNVLPNDPFNTNP. Ser216 is modified (phosphoserine). The stretch at 303–331 forms a coiled coil; it reads IECYRRVEKLRNRQDEIKNKLKEVLTIKE. Residues Ser342 and Ser353 each carry the phosphoserine modification.

Component of the XAB2 complex, a multimeric protein complex composed of XAB2, PRPF19, AQR, ZNF830, ISY1, and PPIE; this complex binds preferentially to RNA. Interacts with XAB2. Identified in a pentameric intron-binding (IB) complex composed of AQR, XAB2, ISY1, ZNF830 and PPIE that is incorporated into the spliceosome as a preassembled complex. The IB complex does not contain PRPF19. Phosphorylated in response to DNA damage by the cell cycle checkpoint kinases ATR/ATM. As to expression, widely expressed at low level. Expressed in oocytes from primordial to antral follicles. Also detected in somatic cells of the ovary, namely, in granulosa cells from the pre-antral follicle stage onward.

It localises to the nucleus. The protein localises to the chromosome. The protein resides in the nucleus speckle. In terms of biological role, may play a role in pre-mRNA splicing as component of the spliceosome. Acts as an important regulator of the cell cycle that participates in the maintenance of genome integrity. During cell cycle progression in embryonic fibroblast, prevents replication fork collapse, double-strand break formation and cell cycle checkpoint activation. Controls mitotic cell cycle progression and cell survival in rapidly proliferating intestinal epithelium and embryonic stem cells. During the embryo preimplantation, controls different aspects of M phase. During early oocyte growth, plays a role in oocyte survival by preventing chromosomal breaks formation, activation of TP63 and reduction of transcription. This is Zinc finger protein 830 from Mus musculus (Mouse).